The following is a 119-amino-acid chain: Putative membrane protein insertion efficiency factor (119 aa).

It belongs to the UPF0161 family.

Its subcellular location is the cell inner membrane. Functionally, could be involved in insertion of integral membrane proteins into the membrane. The polypeptide is Putative membrane protein insertion efficiency factor (Agrobacterium fabrum (strain C58 / ATCC 33970) (Agrobacterium tumefaciens (strain C58))).